A 431-amino-acid polypeptide reads, in one-letter code: MSTIIDVYAREVLDSRGNPTVEVEVYTESGAFGRAIVPSGASTGEHEAVELRDGDKSRYLGKGVVNAVNNVNEIIAPEIAGFDVTDQAGIDRAMIELDGTPNKGKLGANAILGVSMAVAHAAADFVGLPLYRYLGGFNAKQLPTPMMNIINGGSHADNNVDFQEFMILPVGAPTFKESIRMGAEVFHALKAVLHDKGLNTAVGDEGGFAPNLGSNREALEVIIEAIEKAGYKAGENVFLGMDVASSEFYNKETGKYDLAGEGRTGLTSAEMVDFYEELCKDFPIISIEDGLDENDWDGHKLLTERIGDKVQLVGDDLFVTNTQKLAEGIEKGISNSILIKVNQIGTLTETFEAIEMAKRAGYTAVVSHRSGETEDATIADIAVATNAGQIKTGSMSRTDRIAKYNQLLRIEDELGEIAVYDGIKSFYNIKR.

Gln163 is a binding site for (2R)-2-phosphoglycerate. Glu205 (proton donor) is an active-site residue. Residues Asp242, Glu288, and Asp315 each coordinate Mg(2+). Lys340, Arg369, Ser370, and Lys391 together coordinate (2R)-2-phosphoglycerate. Lys340 (proton acceptor) is an active-site residue.

This sequence belongs to the enolase family. Requires Mg(2+) as cofactor.

Its subcellular location is the cytoplasm. The protein resides in the secreted. It is found in the cell surface. The catalysed reaction is (2R)-2-phosphoglycerate = phosphoenolpyruvate + H2O. The protein operates within carbohydrate degradation; glycolysis; pyruvate from D-glyceraldehyde 3-phosphate: step 4/5. Its function is as follows. Catalyzes the reversible conversion of 2-phosphoglycerate (2-PG) into phosphoenolpyruvate (PEP). It is essential for the degradation of carbohydrates via glycolysis. This is Enolase from Bacillus cereus (strain G9842).